A 393-amino-acid polypeptide reads, in one-letter code: GDP-mannose:cellobiosyl-diphosphopolyprenol alpha-mannosyltransferase (393 aa).

This sequence belongs to the glycosyltransferase group 1 family. Glycosyltransferase 4 subfamily.

The enzyme catalyses beta-D-Glc-(1-&gt;4)-alpha-D-Glc-di-trans,octa-cis-undecaprenyl diphosphate + GDP-alpha-D-mannose = alpha-D-Man-(1-&gt;3)-beta-D-Glc-(1-&gt;4)-alpha-D-Glc-1-di-trans,octa-cis-undecaprenyl diphosphate + GDP + H(+). Involved in the biosynthesis of the exopolysaccharide acetan, a water-soluble polysaccharide involved in production of bacterial cellulose (BC). In Komagataeibacter xylinus (Gluconacetobacter xylinus), this protein is GDP-mannose:cellobiosyl-diphosphopolyprenol alpha-mannosyltransferase (aceC).